We begin with the raw amino-acid sequence, 320 residues long: Lipoyl synthase (320 aa).

The interval 1–28 is disordered; it reads MVTVVDRVTDRRLRHPEKAHRPDTSVQK. The span at 19–28 shows a compositional bias: basic and acidic residues; sequence AHRPDTSVQK. [4Fe-4S] cluster-binding residues include Cys59, Cys64, Cys70, Cys85, Cys89, Cys92, and Ser298. Residues 71 to 287 enclose the Radical SAM core domain; the sequence is WSQRHASFMI…AKIGKVKGFL (217 aa).

This sequence belongs to the radical SAM superfamily. Lipoyl synthase family. The cofactor is [4Fe-4S] cluster.

The protein localises to the cytoplasm. The enzyme catalyses [[Fe-S] cluster scaffold protein carrying a second [4Fe-4S](2+) cluster] + N(6)-octanoyl-L-lysyl-[protein] + 2 oxidized [2Fe-2S]-[ferredoxin] + 2 S-adenosyl-L-methionine + 4 H(+) = [[Fe-S] cluster scaffold protein] + N(6)-[(R)-dihydrolipoyl]-L-lysyl-[protein] + 4 Fe(3+) + 2 hydrogen sulfide + 2 5'-deoxyadenosine + 2 L-methionine + 2 reduced [2Fe-2S]-[ferredoxin]. Its pathway is protein modification; protein lipoylation via endogenous pathway; protein N(6)-(lipoyl)lysine from octanoyl-[acyl-carrier-protein]: step 2/2. Catalyzes the radical-mediated insertion of two sulfur atoms into the C-6 and C-8 positions of the octanoyl moiety bound to the lipoyl domains of lipoate-dependent enzymes, thereby converting the octanoylated domains into lipoylated derivatives. The sequence is that of Lipoyl synthase from Bartonella henselae (strain ATCC 49882 / DSM 28221 / CCUG 30454 / Houston 1) (Rochalimaea henselae).